A 329-amino-acid chain; its full sequence is MSILSFQMPEKVVMEKADDFHGLFEFKPLEKGYGVTIGNALRRILLSSLEGYAITGIKVPGVLHEFSTIPGVREDVTEIILNLKQVRFKKISDVNENKIVVSIKKQASFKAGDIAKFTSAYQILNPELLICNVDSNSNFDIELTLEKGRGYLPAEENKPAEQIFGYIPIDAIFTPIKNVKYSVENTRVEQRTDYEKLILEILTDGSIHPEDALKGAANILIKHFMLFSDQTMTFEAVKAEEEETVDEEFLHMRKLLKTSLADLDLSVRAYNCLKAADIKTLGELATLDISDMMKFRNFGKKSLNELEQLIIDKNLSFGMDTAKYKLDED.

Residues 1-231 (MSILSFQMPE…KHFMLFSDQT (231 aa)) form an alpha N-terminal domain (alpha-NTD) region. The interval 247-329 (EEFLHMRKLL…DTAKYKLDED (83 aa)) is alpha C-terminal domain (alpha-CTD).

It belongs to the RNA polymerase alpha chain family. Homodimer. The RNAP catalytic core consists of 2 alpha, 1 beta, 1 beta' and 1 omega subunit. When a sigma factor is associated with the core the holoenzyme is formed, which can initiate transcription.

The enzyme catalyses RNA(n) + a ribonucleoside 5'-triphosphate = RNA(n+1) + diphosphate. In terms of biological role, DNA-dependent RNA polymerase catalyzes the transcription of DNA into RNA using the four ribonucleoside triphosphates as substrates. The sequence is that of DNA-directed RNA polymerase subunit alpha from Cytophaga hutchinsonii (strain ATCC 33406 / DSM 1761 / CIP 103989 / NBRC 15051 / NCIMB 9469 / D465).